The primary structure comprises 280 residues: Phosphatidylglycerol--prolipoprotein diacylglyceryl transferase (280 aa).

Helical transmembrane passes span 23 to 43 (LRWYGLMYLVGFAAAFWLAGV), 58 to 78 (LLFWGFLGVILGGRIGYVLFY), 93 to 113 (IWTGGMSFHGGLLGVIAALWW), and 120 to 140 (CTFLQVGDFIAPLVPIGLGAG). Arginine 141 is an a 1,2-diacyl-sn-glycero-3-phospho-(1'-sn-glycerol) binding site. The next 3 helical transmembrane spans lie at 173 to 193 (PSQLYEFALEGVVLFLILWLY), 200 to 220 (IGAVSGLFLLGYGSFRFFVEF), and 241 to 261 (QGQILSAPMIIGGIALMVWAV).

It belongs to the Lgt family.

It is found in the cell inner membrane. It catalyses the reaction L-cysteinyl-[prolipoprotein] + a 1,2-diacyl-sn-glycero-3-phospho-(1'-sn-glycerol) = an S-1,2-diacyl-sn-glyceryl-L-cysteinyl-[prolipoprotein] + sn-glycerol 1-phosphate + H(+). It functions in the pathway protein modification; lipoprotein biosynthesis (diacylglyceryl transfer). Its function is as follows. Catalyzes the transfer of the diacylglyceryl group from phosphatidylglycerol to the sulfhydryl group of the N-terminal cysteine of a prolipoprotein, the first step in the formation of mature lipoproteins. The chain is Phosphatidylglycerol--prolipoprotein diacylglyceryl transferase from Pseudoalteromonas atlantica (strain T6c / ATCC BAA-1087).